Reading from the N-terminus, the 83-residue chain is RNA-binding protein Hfq (83 aa).

The region spanning 10–70 (DAFLNQVRKE…ISTVSPLKPV (61 aa)) is the Sm domain.

This sequence belongs to the Hfq family. Homohexamer.

RNA chaperone that binds small regulatory RNA (sRNAs) and mRNAs to facilitate mRNA translational regulation in response to envelope stress, environmental stress and changes in metabolite concentrations. Also binds with high specificity to tRNAs. The polypeptide is RNA-binding protein Hfq (Pelotomaculum thermopropionicum (strain DSM 13744 / JCM 10971 / SI)).